The sequence spans 462 residues: Protoheme IX farnesyltransferase, mitochondrial (462 aa).

Residues 1–30 (MSYFPRTYAHLMRNVLAHNKGNIYLQIGTQ) constitute a mitochondrion transit peptide. 7 helical membrane passes run 158-178 (TILV…PASV), 234-254 (LIGT…VAIL), 274-294 (IINT…GWAA), 298-318 (LSHP…FPHF), 352-372 (YSIL…TDWY), 373-393 (YQID…KFYW), and 425-445 (FMAS…HKKG).

This sequence belongs to the UbiA prenyltransferase family. Forms ~370 kDa homooligomeric complexes.

It is found in the mitochondrion. It localises to the mitochondrion membrane. It catalyses the reaction heme b + (2E,6E)-farnesyl diphosphate + H2O = Fe(II)-heme o + diphosphate. Its pathway is porphyrin-containing compound metabolism; heme O biosynthesis; heme O from protoheme: step 1/1. Positively regulated by the hydroxylated intermediate (heme I) formed at the subsequent step, or by HAS/COX15 itself. Its function is as follows. Catalyzes the first reaction in the biosynthesis of heme A, a prosthetic group of mitochondrial cytochrome c oxidase (CcO). Heme A is synthesized from heme B by two sequential enzymatic reactions catalyzed by heme O synthase (HOS/COX10) and heme A synthase (HAS/COX15). HOS converts heme B (protoheme IX) to heme O by substitution of the vinyl group on carbon 2 of heme B porphyrin ring with a hydroxyethyl farnesyl side group. The sequence is that of Protoheme IX farnesyltransferase, mitochondrial (COX10) from Saccharomyces cerevisiae (strain ATCC 204508 / S288c) (Baker's yeast).